The primary structure comprises 152 residues: Deoxyuridine 5'-triphosphate nucleotidohydrolase (152 aa).

Substrate-binding positions include 72-74 (RSG), Asn85, and 89-91 (TVD).

The protein belongs to the dUTPase family. Mg(2+) is required as a cofactor.

The enzyme catalyses dUTP + H2O = dUMP + diphosphate + H(+). The protein operates within pyrimidine metabolism; dUMP biosynthesis; dUMP from dCTP (dUTP route): step 2/2. Functionally, this enzyme is involved in nucleotide metabolism: it produces dUMP, the immediate precursor of thymidine nucleotides and it decreases the intracellular concentration of dUTP so that uracil cannot be incorporated into DNA. The sequence is that of Deoxyuridine 5'-triphosphate nucleotidohydrolase from Nitrobacter winogradskyi (strain ATCC 25391 / DSM 10237 / CIP 104748 / NCIMB 11846 / Nb-255).